Reading from the N-terminus, the 190-residue chain is Transcription termination/antitermination protein NusG (190 aa).

In terms of domain architecture, KOW spans 138-166; the sequence is VGEIVTVTEGPFETFTGTVEEVDQEKARL.

It belongs to the NusG family.

In terms of biological role, participates in transcription elongation, termination and antitermination. The polypeptide is Transcription termination/antitermination protein NusG (Rickettsia bellii (strain RML369-C)).